Here is a 376-residue protein sequence, read N- to C-terminus: Carbapenem antibiotics biosynthesis protein CarD (376 aa).

Belongs to the proline oxidase family.

Its pathway is antibiotic biosynthesis; carbapenem biosynthesis. The protein is Carbapenem antibiotics biosynthesis protein CarD (carD) of Pectobacterium carotovorum subsp. carotovorum (Erwinia carotovora subsp. carotovora).